The primary structure comprises 112 residues: Putative inner membrane protein YafU (112 aa).

Topologically, residues 1–21 (MSSERDLVNFLGDFSMDVAKA) are cytoplasmic. A helical membrane pass occupies residues 22–42 (VIAGGVATAIGSLASFACVSF). Residue Gly-43 is a topological domain, periplasmic. The chain crosses the membrane as a helical span at residues 44–64 (FPVILVGGAILLTGIVCTVVL). Over 65-112 (NEIDAQCHLSEKLKYAIRDGLKRQQELDKWKRENMTPFMYVLNTPPVI) the chain is Cytoplasmic.

The protein resides in the cell inner membrane. In Escherichia coli (strain K12), this protein is Putative inner membrane protein YafU (yafU).